Consider the following 168-residue polypeptide: uncharacterized protein (168 aa).

Transmembrane regions (helical) follow at residues 1 to 21 (MFWL…AVAR), 41 to 61 (PYII…VLLM), 68 to 88 (WWLG…WALC), and 123 to 143 (VILE…MCLF).

Its subcellular location is the cell membrane. This is an uncharacterized protein from Bacillus subtilis (strain 168).